A 515-amino-acid chain; its full sequence is MACKISPGANSASLPGHPNKVICERVRLQSLFPLLPSDQNTTVQEDAHFKAFFQSEDSPSPKRQRLSHSVFDYTSASPAPSPPMRPWEMTSNRQPPSVRPSQHHFSGERCNTPARNRRSPPVRRQRGRRDRLSRHNSISQDENYHHLPYAQQQAIEEPRAFHPPNVSPRLLHPAAHPPQQNAVMVDIHDQLHQGTVPVSYTVTTVAPHGIPLCTGQHIPACSTQQVPGCSVVFSGQHLPVCSVPPPMLQACSVQHLPVPYAAFPPLISSDPFLIHPPHLSPHHPPHLPPPGQFVPFQTQQSRSPLQRIENEVELLGEHLPVGGFTYPPSAHPPTLPPSAPLQFLTHDPLHQEVSFGVPYPPFMPRRLTGRSRYRSQQPIPPPPYHPSLLPYVLSMLPVPPAVGPTFSFELDVEDGEVENYEALLNLAERLGEAKPRGLTKADIEQLPSYRFNPNNHQSEQTLCVVCMCDFESRQLLRVLPCNHEFHAKCVDKWLKANRTCPICRADASEVHRDSE.

Residues 57–71 carry the Bipartite nuclear localization signal 1 motif; sequence DSPSPKRQRLSHSVF. The disordered stretch occupies residues 73–141; the sequence is YTSASPAPSP…LSRHNSISQD (69 aa). Over residues 89-104 the composition is skewed to polar residues; the sequence is MTSNRQPPSVRPSQHH. A Bipartite nuclear localization signal 2 motif is present at residues 115 to 131; the sequence is RNRRSPPVRRQRGRRDR. Residues 115–134 show a composition bias toward basic residues; sequence RNRRSPPVRRQRGRRDRLSR. An RING-type zinc finger spans residues 463–504; it reads CVVCMCDFESRQLLRVLPCNHEFHAKCVDKWLKANRTCPICR.

In terms of tissue distribution, widely expressed with highest levels in testis.

Its subcellular location is the nucleus. The enzyme catalyses S-ubiquitinyl-[E2 ubiquitin-conjugating enzyme]-L-cysteine + [acceptor protein]-L-lysine = [E2 ubiquitin-conjugating enzyme]-L-cysteine + N(6)-ubiquitinyl-[acceptor protein]-L-lysine.. The protein operates within protein modification; protein ubiquitination. In terms of biological role, acts as an E3 ubiquitin-protein ligase able to ubiquitinate p53/TP53 which promotes its relocalization to discrete foci associated with PML nuclear bodies. Exhibits preference for UBE2D2 as a E2 enzyme. The polypeptide is E3 ubiquitin-protein ligase RNF38 (Homo sapiens (Human)).